The chain runs to 599 residues: Nucleoporin p58/p45 (599 aa).

5 repeat units span residues 7–8 (FG), 30–31 (FG), 44–45 (FG), 63–64 (FG), and 68–69 (FG). The 14 X 2 AA repeats of F-G stretch occupies residues 7–579 (FGSGTLGSTT…VSNPASAGFG (573 aa)). A disordered region spans residues 213-247 (NEGLGGIDFSSSSDKKSDKTGTRPEDSKALKDENL). Basic and acidic residues predominate over residues 225-246 (SDKKSDKTGTRPEDSKALKDEN). Coiled coils occupy residues 256 to 276 (ENLQ…SRMS) and 314 to 381 (ETAQ…SHIT). Thr-331 carries the post-translational modification Phosphothreonine. A run of 9 repeats spans residues 488–489 (FG), 492–493 (FG), 513–514 (FG), 519–520 (FG), 529–530 (FG), 531–532 (FG), 545–546 (FG), 568–569 (FG), and 578–579 (FG). The interval 579 to 599 (GTGGQLLQLKKPPAGNKRGKR) is disordered.

It belongs to the NUP58 family. As to quaternary structure, component of the p62 complex, a complex at least composed of NUP62, NUP54, and NUP58. Interacts with NUTF2. Interacts with SRP1-alpha and Importin p97 proteins when they are together, but not with SRP1-alpha protein alone. In terms of processing, O-glycosylated.

The protein resides in the nucleus. The protein localises to the nuclear pore complex. It is found in the nucleus membrane. In terms of biological role, component of the nuclear pore complex, a complex required for the trafficking across the nuclear membrane. The sequence is that of Nucleoporin p58/p45 from Homo sapiens (Human).